The following is a 431-amino-acid chain: 4-hydroxy-3-methylbut-2-en-1-yl diphosphate synthase (flavodoxin) (431 aa).

The disordered stretch occupies residues Met1 to Thr21. [4Fe-4S] cluster is bound by residues Cys310, Cys313, Cys356, and Glu363.

It belongs to the IspG family. It depends on [4Fe-4S] cluster as a cofactor.

It carries out the reaction (2E)-4-hydroxy-3-methylbut-2-enyl diphosphate + oxidized [flavodoxin] + H2O + 2 H(+) = 2-C-methyl-D-erythritol 2,4-cyclic diphosphate + reduced [flavodoxin]. It participates in isoprenoid biosynthesis; isopentenyl diphosphate biosynthesis via DXP pathway; isopentenyl diphosphate from 1-deoxy-D-xylulose 5-phosphate: step 5/6. Functionally, converts 2C-methyl-D-erythritol 2,4-cyclodiphosphate (ME-2,4cPP) into 1-hydroxy-2-methyl-2-(E)-butenyl 4-diphosphate. The protein is 4-hydroxy-3-methylbut-2-en-1-yl diphosphate synthase (flavodoxin) of Nitrobacter hamburgensis (strain DSM 10229 / NCIMB 13809 / X14).